The chain runs to 449 residues: Clusterin (449 aa).

The signal sequence occupies residues 1–21 (MKTLLLLVGLLLTLENGQVLG). A Nuclear localization signal motif is present at residues 77–80 (KKKK). 2 N-linked (GlcNAc...) asparagine glycosylation sites follow: N85 and N102. 5 cysteine pairs are disulfide-bonded: C101-C313, C112-C305, C115-C302, C120-C295, and C128-C285. At S132 the chain carries Phosphoserine. Residues N144, N291, N328, N354, and N374 are each glycosylated (N-linked (GlcNAc...) asparagine). S396 bears the Phosphoserine mark. The Nuclear localization signal signature appears at 443-447 (RQKNR).

Belongs to the clusterin family. As to quaternary structure, antiparallel disulfide-linked heterodimer of an alpha chain and a beta chain. Self-associates and forms higher oligomers. Interacts with a broad range of misfolded proteins, including APP, APOC2 and LYZ. Slightly acidic pH promotes interaction with misfolded proteins. Forms high-molecular weight oligomers upon interaction with misfolded proteins. Interacts with APOA1, LRP2, CLUAP1 and PON1. Interacts with the complement membrane attack complex. Interacts (via alpha chain) with XRCC6. Interacts with SYVN1, COMMD1, BTRC, CUL1 and with ubiquitin and SCF (SKP1-CUL1-F-box protein) E3 ubiquitin-protein ligase complexes. Interacts (via alpha chain) with BAX in stressed cells, where BAX undergoes a conformation change leading to association with the mitochondrial membrane. Does not interact with BAX in unstressed cells. Found in a complex with LTF, CLU, EPPIN and SEMG1. Interacts (immaturely glycosylated pre-secreted form) with HSPA5; this interaction promotes CLU stability and facilitates stress-induced CLU retrotranslocation from the secretory pathway to the mitochondria, thereby reducing stress-induced apoptosis by stabilizing mitochondrial membrane integrity. Interacts with BCL2L1; this interaction releases and activates BAX and promotes cell death. Interacts with TGFBR2 and ACVR1. Interacts (secreted form) with STMN3; this interaction may act as an important modulator during neuronal differentiation. Interacts with VLDLR and LRP8. In terms of processing, proteolytically cleaved on its way through the secretory system, probably within the Golgi lumen. Proteolytic cleavage is not necessary for its chaperone activity. All non-secreted forms are not proteolytically cleaved. Chaperone activity of uncleaved forms is dependent on a non-reducing environment. Post-translationally, polyubiquitinated, leading to proteasomal degradation. Under cellular stress, the intracellular level of cleaved form is reduced due to proteasomal degradation. Heavily N-glycosylated. About 30% of the protein mass is comprised of complex N-linked carbohydrate. Endoplasmic reticulum (ER) stress induces changes in glycosylation status and increases level of hypoglycosylated forms. Core carbohydrates are essential for chaperone activity. Non-secreted forms are hypoglycosylated or unglycosylated.

It is found in the secreted. The protein resides in the nucleus. Its subcellular location is the cytoplasm. The protein localises to the mitochondrion membrane. It localises to the cytosol. It is found in the microsome. The protein resides in the endoplasmic reticulum. Its subcellular location is the mitochondrion. The protein localises to the perinuclear region. It localises to the cytoplasmic vesicle. It is found in the secretory vesicle. The protein resides in the chromaffin granule. Functionally, functions as extracellular chaperone that prevents aggregation of non native proteins. Prevents stress-induced aggregation of blood plasma proteins. Inhibits formation of amyloid fibrils by APP, APOC2, B2M, CALCA, CSN3, SNCA and aggregation-prone LYZ variants (in vitro). Does not require ATP. Maintains partially unfolded proteins in a state appropriate for subsequent refolding by other chaperones, such as HSPA8/HSC70. Does not refold proteins by itself. Binding to cell surface receptors triggers internalization of the chaperone-client complex and subsequent lysosomal or proteasomal degradation. When secreted, protects cells against apoptosis and against cytolysis by complement: inhibits assembly of the complement membrane attack complex (MAC) by preventing polymerization of C9 pore component of the MAC complex. Intracellular forms interact with ubiquitin and SCF (SKP1-CUL1-F-box protein) E3 ubiquitin-protein ligase complexes and promote the ubiquitination and subsequent proteasomal degradation of target proteins. Promotes proteasomal degradation of COMMD1 and IKBKB. Modulates NF-kappa-B transcriptional activity. Following stress, promotes apoptosis. Inhibits apoptosis when associated with the mitochondrial membrane by interference with BAX-dependent release of cytochrome c into the cytoplasm. Plays a role in the regulation of cell proliferation. An intracellular form suppresses stress-induced apoptosis by stabilizing mitochondrial membrane integrity through interaction with HSPA5. Secreted form does not affect caspase or BAX-mediated intrinsic apoptosis and TNF-induced NF-kappa-B-activity. Secreted form act as an important modulator during neuronal differentiation through interaction with STMN3. Plays a role in the clearance of immune complexes that arise during cell injury. This Equus caballus (Horse) protein is Clusterin (CLU).